We begin with the raw amino-acid sequence, 41 residues long: Large ribosomal subunit protein bL36 (41 aa).

Belongs to the bacterial ribosomal protein bL36 family.

The sequence is that of Large ribosomal subunit protein bL36 from Rickettsia prowazekii (strain Madrid E).